We begin with the raw amino-acid sequence, 179 residues long: Guanosine-3',5'-bis(diphosphate) 3'-pyrophosphohydrolase MESH1 (179 aa).

An HD domain is found at 32–127; the sequence is YINHPLGVAR…VKLADKLYNL (96 aa). Mn(2+)-binding residues include His-35, His-61, and Asp-62. Active-site nucleophile residues include Glu-65 and Asp-66. Asp-122 contributes to the Mn(2+) binding site.

This sequence belongs to the MESH1 family. Mn(2+) is required as a cofactor.

The catalysed reaction is guanosine 3',5'-bis(diphosphate) + H2O = GDP + diphosphate + H(+). In terms of biological role, ppGpp hydrolyzing enzyme involved in starvation response. The chain is Guanosine-3',5'-bis(diphosphate) 3'-pyrophosphohydrolase MESH1 (hddc3) from Xenopus tropicalis (Western clawed frog).